Here is a 468-residue protein sequence, read N- to C-terminus: Putative ankyrin repeat protein R873 (468 aa).

14 ANK repeats span residues 38–68 (IKTD…KHNL), 78–107 (SLNE…DIEG), 109–137 (DNCA…NFRA), 138–167 (NNDK…DIRS), 169–197 (NDCS…NIRT), 198–227 (NDDW…DIRS), 229–257 (DDHA…NIIA), 258–287 (EDNY…NITS), 289–316 (YYTI…NIRD), 317–346 (CDSS…DFRE), 348–376 (DDLT…DFRV), 378–406 (DDYP…DVRA), 407–436 (EDDY…NIRA), and 438–466 (NDYA…VLNK).

The protein is Putative ankyrin repeat protein R873 of Acanthamoeba polyphaga mimivirus (APMV).